Reading from the N-terminus, the 242-residue chain is 6-carboxyhexanoate--CoA ligase (242 aa).

It belongs to the BioW family. As to quaternary structure, homodimer. Mg(2+) serves as cofactor.

The catalysed reaction is heptanedioate + ATP + CoA = 6-carboxyhexanoyl-CoA + AMP + diphosphate. It participates in metabolic intermediate metabolism; pimeloyl-CoA biosynthesis; pimeloyl-CoA from pimelate: step 1/1. Catalyzes the transformation of pimelate into pimeloyl-CoA with concomitant hydrolysis of ATP to AMP. This is 6-carboxyhexanoate--CoA ligase from Veillonella parvula (strain ATCC 10790 / DSM 2008 / CCUG 5123 / JCM 12972 / NCTC 11810 / Te3) (Veillonella alcalescens).